We begin with the raw amino-acid sequence, 1230 residues long: Potassium channel subfamily T member 1 (1230 aa).

Residues 1 to 37 are disordered; it reads MARAKLPRSPSEGKAGPGGAPAGAAAPEEPHGLSPLL. Residues 1-93 are Cytoplasmic-facing; it reads MARAKLPRSP…LFFIKNQRSS (93 aa). A helical membrane pass occupies residues 94–126; the sequence is LRIRLFNFSLKLLTCLLYIVRVLLDDPALGIGC. Over 127–153 the chain is Extracellular; it reads WGCPKQNYSFNDSSSEINWAPILWVER. N-linked (GlcNAc...) asparagine glycans are attached at residues Asn-133 and Asn-137. Residues 154–178 form a helical membrane-spanning segment; sequence KMTLWAIQVIVAIISFLETMLLIYL. Residues 179–192 are Cytoplasmic-facing; it reads SYKGNIWEQIFRVS. A helical transmembrane segment spans residues 193–208; that stretch reads FVLEMINTLPFIITIF. Residues 209–215 lie on the Extracellular side of the membrane; it reads WPPLRNL. The chain crosses the membrane as a helical span at residues 216 to 233; sequence FIPVFLNCWLAKHALENM. At 234-246 the chain is on the cytoplasmic side; the sequence is INDFHRAILRTQS. The helical transmembrane segment at 247-274 threads the bilayer; sequence AMFNQVLILFCTLLCLVFTGTCGIQHLE. Residues 275-281 are Extracellular-facing; it reads RAGENLS. The segment at residues 282–302 is an intramembrane region (pore-forming); that stretch reads LLTSFYFCIVTFSTVGYGDVT. The K(+) site is built by Val-296 and Gly-297. The Extracellular portion of the chain corresponds to 303-304; sequence PK. Residues 305-338 traverse the membrane as a helical segment; the sequence is IWPSQLLVVIMICVALVVLPLQFEELVYLWMERQ. Residues 339–1230 lie on the Cytoplasmic side of the membrane; sequence KSGGNYSRHR…NPETRDETQL (892 aa). Residues 352–488 enclose the RCK N-terminal 1 domain; the sequence is EKHVVLCVSS…FHVKFADHVV (137 aa). Leu-513, His-516, Ser-538, and Asn-540 together coordinate Na(+). The disordered stretch occupies residues 660–689; it reads TEHRPTQSGGGGGGSKLALPTENGSGSRRP. 2 residues coordinate Zn(2+): Cys-758 and Cys-759. K(+) is bound by residues Arg-761 and Lys-764. The Na(+) site is built by Arg-761 and Lys-764. 2 residues coordinate Zn(2+): Cys-766 and His-768. 4 residues coordinate K(+): Asn-769, Tyr-771, Tyr-777, and Gly-778. Tyr-771 lines the Na(+) pocket. Phe-779 serves as a coordination point for Na(+). The 141-residue stretch at 781-921 folds into the RCK N-terminal 2 domain; the sequence is NKLIIVSAET…QFRAKDSYSL (141 aa). Residues Ser-787, Leu-818, Asp-820, Gly-842, and Asp-865 each coordinate K(+). Disordered stretches follow at residues 1048-1078 and 1204-1230; these read EVKG…EHPL and SSSQ…ETQL. The span at 1057-1072 shows a compositional bias: gly residues; that stretch reads AGTGGSSQGRHTGGGD. The span at 1204–1219 shows a compositional bias: low complexity; sequence SSSQSRKSSCSHKLSS.

Belongs to the potassium channel family. Calcium-activated (TC 1.A.1.3) subfamily. KCa4.1/KCNT1 sub-subfamily. In terms of assembly, homotetramer; which constitutes the Na(+)-activated K(+) channel. Interacts with KCNT2; these heterodimer channels differ from the homomers in their unitary conductance, kinetic behavior, subcellular localization, and response to activation of protein kinase C. Interacts (via C-terminus) with FMR1; this interaction alters gating properties of KCNT1. Interacts with CRBN via its cytoplasmic C-terminus. Post-translationally, phosphorylated by protein kinase C. Phosphorylation of the C-terminal domain increases channel activity. Highest expression in liver, brain and spinal cord. Lowest expression in skeletal muscle.

Its subcellular location is the cell membrane. The enzyme catalyses K(+)(in) = K(+)(out). Activated by high intracellular Na(+). In addition to activation by Na(+), is cooperatively activated by intracellular Cl(-) levels. Inhibited by Zn(2+). Activated upon stimulation of G-protein coupled receptors, such as CHRM1 and GRIA1. Functionally, sodium-activated K(+) channel. Acts as an important mediator of neuronal membrane excitability. Contributes to the delayed outward currents. Regulates neuronal bursting in sensory neurons. Contributes to synaptic development and plasticity. This Homo sapiens (Human) protein is Potassium channel subfamily T member 1.